The primary structure comprises 178 residues: Beta-lactoglobulin-1A/1C (178 aa).

An N-terminal signal peptide occupies residues Met-1–Ala-18. Cystine bridges form between Cys-84–Cys-176 and Cys-124–Cys-137.

The protein belongs to the calycin superfamily. Lipocalin family. In terms of assembly, under physiological conditions beta-lactoglobulin exists as an equilibrium mixture of monomeric and dimeric forms.

The protein resides in the secreted. In terms of biological role, lactoglobulin is the primary component of whey, it binds retinol and is probably involved in the transport of that molecule. The protein is Beta-lactoglobulin-1A/1C of Sus scrofa (Pig).